A 969-amino-acid polypeptide reads, in one-letter code: Putative zinc protease mug138 (969 aa).

His68 is a binding site for Zn(2+). Glu71 serves as the catalytic Proton acceptor. Positions 72 and 149 each coordinate Zn(2+).

This sequence belongs to the peptidase M16 family.

Its subcellular location is the cytoplasm. Its function is as follows. Has a role in meiosis. The polypeptide is Putative zinc protease mug138 (mug138) (Schizosaccharomyces pombe (strain 972 / ATCC 24843) (Fission yeast)).